A 714-amino-acid polypeptide reads, in one-letter code: Fatty acid oxidation complex subunit alpha (714 aa).

An enoyl-CoA hydratase region spans residues 1–190 (MEMASAFTLN…KLGLVDDVVP (190 aa)). The 3-hydroxyacyl-CoA dehydrogenase stretch occupies residues 306 to 714 (APLNSVGILG…FWKTTATDLQ (409 aa)).

In the N-terminal section; belongs to the enoyl-CoA hydratase/isomerase family. This sequence in the central section; belongs to the 3-hydroxyacyl-CoA dehydrogenase family. As to quaternary structure, heterotetramer of two alpha chains (FadJ) and two beta chains (FadI).

It localises to the cytoplasm. It carries out the reaction a (3S)-3-hydroxyacyl-CoA = a (2E)-enoyl-CoA + H2O. It catalyses the reaction a 4-saturated-(3S)-3-hydroxyacyl-CoA = a (3E)-enoyl-CoA + H2O. The enzyme catalyses a (3S)-3-hydroxyacyl-CoA + NAD(+) = a 3-oxoacyl-CoA + NADH + H(+). The catalysed reaction is (3S)-3-hydroxybutanoyl-CoA = (3R)-3-hydroxybutanoyl-CoA. The protein operates within lipid metabolism; fatty acid beta-oxidation. Functionally, catalyzes the formation of a hydroxyacyl-CoA by addition of water on enoyl-CoA. Also exhibits 3-hydroxyacyl-CoA epimerase and 3-hydroxyacyl-CoA dehydrogenase activities. This is Fatty acid oxidation complex subunit alpha from Shigella boydii serotype 4 (strain Sb227).